Consider the following 665-residue polypeptide: DNA ligase (665 aa).

Residues 32–36 (DSEYD), 81–82 (SL), and Glu-110 each bind NAD(+). The active-site N6-AMP-lysine intermediate is Lys-112. The NAD(+) site is built by Arg-133, Glu-167, Lys-283, and Lys-307. Positions 401, 404, 419, and 424 each coordinate Zn(2+). One can recognise a BRCT domain in the interval 586-665 (EGHPDFSGKT…AAFIEKQNGI (80 aa)).

This sequence belongs to the NAD-dependent DNA ligase family. LigA subfamily. Mg(2+) is required as a cofactor. It depends on Mn(2+) as a cofactor.

The enzyme catalyses NAD(+) + (deoxyribonucleotide)n-3'-hydroxyl + 5'-phospho-(deoxyribonucleotide)m = (deoxyribonucleotide)n+m + AMP + beta-nicotinamide D-nucleotide.. DNA ligase that catalyzes the formation of phosphodiester linkages between 5'-phosphoryl and 3'-hydroxyl groups in double-stranded DNA using NAD as a coenzyme and as the energy source for the reaction. It is essential for DNA replication and repair of damaged DNA. The sequence is that of DNA ligase from Staphylococcus epidermidis (strain ATCC 35984 / DSM 28319 / BCRC 17069 / CCUG 31568 / BM 3577 / RP62A).